A 268-amino-acid chain; its full sequence is Indole-3-glycerol phosphate synthase (268 aa).

The protein belongs to the TrpC family.

It carries out the reaction 1-(2-carboxyphenylamino)-1-deoxy-D-ribulose 5-phosphate + H(+) = (1S,2R)-1-C-(indol-3-yl)glycerol 3-phosphate + CO2 + H2O. It functions in the pathway amino-acid biosynthesis; L-tryptophan biosynthesis; L-tryptophan from chorismate: step 4/5. The chain is Indole-3-glycerol phosphate synthase (trpC) from Acinetobacter baylyi (strain ATCC 33305 / BD413 / ADP1).